The primary structure comprises 233 residues: Pre-hexon-linking protein VIII (233 aa).

The residue at position 64 (Thr64) is a Phosphothreonine; by host. A propeptide spanning residues 112–163 is cleaved from the precursor; it reads ARHSFRYKGRTEPYPSPAIKRVLIRGKGIQLNDEVTSPLGVRPDGVFQLGGS. Position 180 is a phosphoserine; by host (Ser180).

It belongs to the adenoviridae hexon-linking protein family. Interacts with the peripentonal hexons as well as the hexons in the facets. Part of a complex composed of the core-capsid bridging protein, the endosome lysis protein VI and the hexon-linking protein VIII; these interactions bridge the virus core to the capsid. In terms of processing, cleaved by the viral protease during virion maturation. May cause the middle segment to be shed from the capsid.

Its subcellular location is the virion. The protein localises to the host nucleus. Functionally, structural component of the virion that acts as a cement protein on the capsid interior and which glue the peripentonal hexons and group-of-nine hexons together. The polypeptide is Pre-hexon-linking protein VIII (Homo sapiens (Human)).